Consider the following 481-residue polypeptide: UDP-N-acetylmuramate--L-alanine ligase (481 aa).

115–121 (GTHGKTT) serves as a coordination point for ATP.

The protein belongs to the MurCDEF family.

Its subcellular location is the cytoplasm. The enzyme catalyses UDP-N-acetyl-alpha-D-muramate + L-alanine + ATP = UDP-N-acetyl-alpha-D-muramoyl-L-alanine + ADP + phosphate + H(+). The protein operates within cell wall biogenesis; peptidoglycan biosynthesis. In terms of biological role, cell wall formation. In Granulibacter bethesdensis (strain ATCC BAA-1260 / CGDNIH1), this protein is UDP-N-acetylmuramate--L-alanine ligase.